Here is a 160-residue protein sequence, read N- to C-terminus: Small ribosomal subunit protein uS7A (160 aa).

The protein belongs to the universal ribosomal protein uS7 family. As to quaternary structure, part of the 30S ribosomal subunit. Contacts proteins S9 and S11.

In terms of biological role, one of the primary rRNA binding proteins, it binds directly to 16S rRNA where it nucleates assembly of the head domain of the 30S subunit. Is located at the subunit interface close to the decoding center, probably blocks exit of the E-site tRNA. This is Small ribosomal subunit protein uS7A from Aquifex aeolicus (strain VF5).